Here is a 159-residue protein sequence, read N- to C-terminus: Serine-protein kinase RsbW (159 aa).

The protein belongs to the anti-sigma-factor family.

The enzyme catalyses L-seryl-[protein] + ATP = O-phospho-L-seryl-[protein] + ADP + H(+). The catalysed reaction is L-threonyl-[protein] + ATP = O-phospho-L-threonyl-[protein] + ADP + H(+). Functionally, negative regulator of sigma-B activity. Phosphorylates and inactivates its specific antagonist protein, RsbV. Upon phosphorylation of RsbV, RsbW is released and binds to sigma-B, thereby blocking its ability to form an RNA polymerase holoenzyme (E-sigma-B). This chain is Serine-protein kinase RsbW, found in Staphylococcus aureus (strain Newman).